Consider the following 54-residue polypeptide: Large ribosomal subunit protein bL33 (54 aa).

The protein belongs to the bacterial ribosomal protein bL33 family.

This Legionella pneumophila (strain Lens) protein is Large ribosomal subunit protein bL33.